Reading from the N-terminus, the 801-residue chain is Leucine--tRNA ligase (801 aa).

The 'HIGH' region motif lies at 40-51 (PYPSGAGLHVGH). A 'KMSKS' region motif is present at residues 576–580 (KMSKS). Position 579 (lysine 579) interacts with ATP.

This sequence belongs to the class-I aminoacyl-tRNA synthetase family.

It localises to the cytoplasm. It catalyses the reaction tRNA(Leu) + L-leucine + ATP = L-leucyl-tRNA(Leu) + AMP + diphosphate. The chain is Leucine--tRNA ligase from Exiguobacterium sibiricum (strain DSM 17290 / CCUG 55495 / CIP 109462 / JCM 13490 / 255-15).